The following is a 368-amino-acid chain: Agmatine deiminase (368 aa).

Residue C357 is the Amidino-cysteine intermediate of the active site.

It belongs to the agmatine deiminase family. Homodimer.

It carries out the reaction agmatine + H2O = N-carbamoylputrescine + NH4(+). Its pathway is amine and polyamine biosynthesis; putrescine biosynthesis via agmatine pathway; N-carbamoylputrescine from agmatine: step 1/1. Its function is as follows. Mediates the hydrolysis of agmatine into N-carbamoylputrescine in the arginine decarboxylase (ADC) pathway of putrescine biosynthesis, a basic polyamine. The polypeptide is Agmatine deiminase (Pseudomonas aeruginosa (strain UCBPP-PA14)).